The primary structure comprises 408 residues: Arginine biosynthesis bifunctional protein ArgJ (408 aa).

The substrate site is built by Thr158, Lys184, Thr195, Glu281, Asn403, and Thr408. Residue Thr195 is the Nucleophile of the active site.

The protein belongs to the ArgJ family. In terms of assembly, heterotetramer of two alpha and two beta chains.

It is found in the cytoplasm. It carries out the reaction N(2)-acetyl-L-ornithine + L-glutamate = N-acetyl-L-glutamate + L-ornithine. It catalyses the reaction L-glutamate + acetyl-CoA = N-acetyl-L-glutamate + CoA + H(+). The protein operates within amino-acid biosynthesis; L-arginine biosynthesis; L-ornithine and N-acetyl-L-glutamate from L-glutamate and N(2)-acetyl-L-ornithine (cyclic): step 1/1. It functions in the pathway amino-acid biosynthesis; L-arginine biosynthesis; N(2)-acetyl-L-ornithine from L-glutamate: step 1/4. Its function is as follows. Catalyzes two activities which are involved in the cyclic version of arginine biosynthesis: the synthesis of N-acetylglutamate from glutamate and acetyl-CoA as the acetyl donor, and of ornithine by transacetylation between N(2)-acetylornithine and glutamate. This Bacillus thuringiensis subsp. konkukian (strain 97-27) protein is Arginine biosynthesis bifunctional protein ArgJ.